Reading from the N-terminus, the 156-residue chain is Cytochrome c-type biogenesis protein CcmE 2 (156 aa).

Topologically, residues 1 to 8 are cytoplasmic; it reads MNPQRRRR. Residues 9 to 29 traverse the membrane as a helical; Signal-anchor for type II membrane protein segment; sequence LWWVLALLLAGGLATTLVSMA. Over 30-156 the chain is Periplasmic; the sequence is LQRNVAYLYT…AAANQGGALR (127 aa). Residues histidine 123 and tyrosine 127 each coordinate heme. The interval 135–156 is disordered; that stretch reads KMGSAHRKHDVPAAANQGGALR.

This sequence belongs to the CcmE/CycJ family.

The protein resides in the cell inner membrane. Its function is as follows. Heme chaperone required for the biogenesis of c-type cytochromes. Transiently binds heme delivered by CcmC and transfers the heme to apo-cytochromes in a process facilitated by CcmF and CcmH. The polypeptide is Cytochrome c-type biogenesis protein CcmE 2 (Xanthomonas oryzae pv. oryzae (strain MAFF 311018)).